The primary structure comprises 84 residues: Mu-conotoxin-like Cal 12.2a (84 aa).

The N-terminal stretch at 1 to 19 (MKLTCVLVVLLLVLPFGDL) is a signal peptide. Positions 20–42 (ITTSNTEDNKRGATPWQNSLKAR) are excised as a propeptide. 4 disulfides stabilise this stretch: Cys45–Cys57, Cys52–Cys65, Cys59–Cys70, and Cys64–Cys76. Pro48 bears the 4-hydroxyproline mark. Trp72 carries the 6'-bromotryptophan modification. Position 77 is a 4-hydroxyproline (Pro77). Trp81 carries the 6'-bromotryptophan modification.

This sequence belongs to the conotoxin O1 superfamily. In terms of tissue distribution, expressed by the venom duct.

The protein localises to the secreted. Mu-conotoxins block voltage-gated sodium channels. This toxin reversibly blocks voltage-gated sodium channel in cephalopods, with no alteration in the voltage dependence of sodium conductance or on the kinetics of inactivation. This chain is Mu-conotoxin-like Cal 12.2a, found in Californiconus californicus (California cone).